Consider the following 236-residue polypeptide: 1-(5-phosphoribosyl)-5-[(5-phosphoribosylamino)methylideneamino] imidazole-4-carboxamide isomerase (236 aa).

Catalysis depends on Asp8, which acts as the Proton acceptor. Asp127 (proton donor) is an active-site residue.

Belongs to the HisA/HisF family.

It localises to the cytoplasm. It carries out the reaction 1-(5-phospho-beta-D-ribosyl)-5-[(5-phospho-beta-D-ribosylamino)methylideneamino]imidazole-4-carboxamide = 5-[(5-phospho-1-deoxy-D-ribulos-1-ylimino)methylamino]-1-(5-phospho-beta-D-ribosyl)imidazole-4-carboxamide. It functions in the pathway amino-acid biosynthesis; L-histidine biosynthesis; L-histidine from 5-phospho-alpha-D-ribose 1-diphosphate: step 4/9. The polypeptide is 1-(5-phosphoribosyl)-5-[(5-phosphoribosylamino)methylideneamino] imidazole-4-carboxamide isomerase (Campylobacter concisus (strain 13826)).